We begin with the raw amino-acid sequence, 526 residues long: Cytochrome P450 monooxygenase COX2 (526 aa).

N-linked (GlcNAc...) asparagine glycosylation occurs at N11. A helical transmembrane segment spans residues 12-31; sequence ITTNHVAAAVCAGIAVYAIV. N302 carries N-linked (GlcNAc...) asparagine glycosylation. C450 lines the heme pocket.

The protein belongs to the cytochrome P450 family. Heme serves as cofactor.

The protein resides in the membrane. Its pathway is secondary metabolite biosynthesis. Cytochrome P450 monooxygenase; part of the gene cluster that mediates the biosynthesis of alpha-cuprenene and oxidized derivatives. The alpha-cuprenene synthase COP6 is the only sesquiterpene synthase identified in C.cinereus that appears to be part of a biosynthetic gene cluster and is highly specific since it catalyzes the cyclization of (2E,6E)-farnesyl diphosphate into only one product, alpha-cuprenene. The cytochrome P450 monooxygenase COX2 then oxidizes the cyclohexadiene ring of alpha-cuprenene at positions 1 and 4, yielding first alpha-cuparene, followed by alpha-cuparophenol and a further yet unidentified compound resulting from one additional oxidation step. The cytochrome P450 monooxygenase COX1 then likely catalyzes the oxidation at position 9 of the pentane ring of alpha-cuprenene to give the corresponding hydroxy or ketone derivatives. The protein is Cytochrome P450 monooxygenase COX2 of Coprinopsis cinerea (strain Okayama-7 / 130 / ATCC MYA-4618 / FGSC 9003) (Inky cap fungus).